We begin with the raw amino-acid sequence, 453 residues long: Bifunctional protein GlmU (453 aa).

A pyrophosphorylase region spans residues 1–226 (MLDILILAAG…IQEVEGINNR (226 aa)). UDP-N-acetyl-alpha-D-glucosamine-binding positions include 7–10 (LAAG), Lys-21, Gln-72, 77–78 (GT), 99–101 (YGD), Gly-136, Glu-151, Asn-166, and Asn-224. Asp-101 lines the Mg(2+) pocket. Asn-224 is a Mg(2+) binding site. The tract at residues 227–247 (QQQATLERYYQQQQARALMDA) is linker. Residues 248–453 (GVTLLDPARF…QGWERPTRKS (206 aa)) are N-acetyltransferase. Residues Arg-330 and Lys-348 each contribute to the UDP-N-acetyl-alpha-D-glucosamine site. The Proton acceptor role is filled by His-360. UDP-N-acetyl-alpha-D-glucosamine-binding residues include Tyr-363 and Asn-374. Acetyl-CoA-binding positions include Ala-377, 383 to 384 (NY), Ser-402, Ala-420, and Arg-437.

In the N-terminal section; belongs to the N-acetylglucosamine-1-phosphate uridyltransferase family. This sequence in the C-terminal section; belongs to the transferase hexapeptide repeat family. As to quaternary structure, homotrimer. The cofactor is Mg(2+).

It is found in the cytoplasm. The enzyme catalyses alpha-D-glucosamine 1-phosphate + acetyl-CoA = N-acetyl-alpha-D-glucosamine 1-phosphate + CoA + H(+). It carries out the reaction N-acetyl-alpha-D-glucosamine 1-phosphate + UTP + H(+) = UDP-N-acetyl-alpha-D-glucosamine + diphosphate. It functions in the pathway nucleotide-sugar biosynthesis; UDP-N-acetyl-alpha-D-glucosamine biosynthesis; N-acetyl-alpha-D-glucosamine 1-phosphate from alpha-D-glucosamine 6-phosphate (route II): step 2/2. It participates in nucleotide-sugar biosynthesis; UDP-N-acetyl-alpha-D-glucosamine biosynthesis; UDP-N-acetyl-alpha-D-glucosamine from N-acetyl-alpha-D-glucosamine 1-phosphate: step 1/1. Its pathway is bacterial outer membrane biogenesis; LPS lipid A biosynthesis. Functionally, catalyzes the last two sequential reactions in the de novo biosynthetic pathway for UDP-N-acetylglucosamine (UDP-GlcNAc). The C-terminal domain catalyzes the transfer of acetyl group from acetyl coenzyme A to glucosamine-1-phosphate (GlcN-1-P) to produce N-acetylglucosamine-1-phosphate (GlcNAc-1-P), which is converted into UDP-GlcNAc by the transfer of uridine 5-monophosphate (from uridine 5-triphosphate), a reaction catalyzed by the N-terminal domain. The chain is Bifunctional protein GlmU from Cellvibrio japonicus (strain Ueda107) (Pseudomonas fluorescens subsp. cellulosa).